The chain runs to 318 residues: E3 ubiquitin-protein ligase NRDP1 (318 aa).

Residues 18 to 57 form an RING-type; degenerate zinc finger; the sequence is CPICSGVLEEPVRAPHCEHAFCNACITQWFAQQQICPVDR. An SIAH-type; degenerate zinc finger spans residues 78-138; that stretch reads KLQISCDNAG…MPNHNCIKHL (61 aa).

It carries out the reaction S-ubiquitinyl-[E2 ubiquitin-conjugating enzyme]-L-cysteine + [acceptor protein]-L-lysine = [E2 ubiquitin-conjugating enzyme]-L-cysteine + N(6)-ubiquitinyl-[acceptor protein]-L-lysine.. It functions in the pathway protein modification; protein ubiquitination. Its function is as follows. Acts as E3 ubiquitin-protein ligase and regulates the degradation of target proteins. In Danio rerio (Zebrafish), this protein is E3 ubiquitin-protein ligase NRDP1 (rnf41).